The following is a 1228-amino-acid chain: MKALDEPPYLTVGTDVSAKYRGAFCEAKIKTAKRLVKVKVTFRHDSSTVEVQDDHIKGPLKVGAIVEVKNLDGAYQEAVINKLTDASWYTVVFDDGDEKTLRRSSLCLKGERHFAESETLDQLPLTNPEHFGTPVIGKKTNRGRRSNHIPEEESSSSSSDDDEDDRKQTDELLGKVVCVDYISLDKKKALWFPALVVCPDCSDEIAVKKDNILVRSFKDGKFTSVPRKDVHEITSDTAPKPDAVLKQAFDQALEFHKSRTIPANWKTELKEDSSSSEAEEEEEEEDDEKEKEDNSSEEEEEIEPFPEERENFLQQLYKFMEDRGTPINKRPVLGYRNLNLFKLFRLVHKLGGFDNIESGAVWKQVYQDLGIPVLNSAAGYNVKCAYKKYLYGFEEYCRSANIDFQMALPEKVLNKPCKDCENKEIKVKEESDAEIKEVNVEDSKNMIPKEETPAEDESERKENIKPSLGSKKGLLECIPAQSDQEKEANITKLEEKESLEDKDGATARAEEALSTEVDAEEEQARSGYDEWIKADKIVRPADKNVPKIKHRKKIKNKLDKEKDRDEKYSPKNCKLRRLSKSPFQSNPSPEMVSKLDLADAKNSDTGHIKSIEITSILNGLQASESSAEDSEQEEERCAQDPESSSKDESKVEHSAHSRSELISKEELSSPSLLEENKVHPDLVIAKTVSKSPERLRKDVEAISEDTDFEEEDEITKKRKDVKKDTTDKALKPQTKTWGKDRYCIQTNCLQSGSPGKKEDRTKSKEPLCTGNSSNSSSDEDEEEKSKAKMTPTKKYNGLEEKRKSLRTTSFYSGFSEVAEKRIKLLNNSDERLQNNRAKDRKDVWSSIQGQWPKKTLKELFSDSDTEAAASPPHAAPDEGTVEESLQTVAEEESCSPNMELEKPLPTSVDSKPVEEKPLEVSDRKTEFPSSGSNSVLNTPPTTPESPSSVTVTETSQQQSSVTVSVPLPPNQEEVRSIKSETDSTIEVDSVVGELQDLQSEGNSSPAGFNASVSSSSSNQPEPEHPEKACTGQKRVKDTQGVGSSSKKQKRSHKATVVNNKKKGKGTNSSDSEDLSAGESVTKTQAIKSVPTGMKTHNSKSPARIQSPGKCGKNGDKDPDLKEPSNRLPKVYKWSFQMSDLENMTSAERISILQEKLQEIRKHYLSLKSEVASIDRRRKRLKKKERESAATSSSSSSPSSSSITAAVMLTLAEPSMSSASQNGMSVECR.

Disordered regions lie at residues 123–167 (LPLT…DDRK) and 266–307 (KTEL…PFPE). 3 positions are modified to phosphoserine: Ser-276, Ser-295, and Ser-296. Positions 277-305 (EAEEEEEEEDDEKEKEDNSSEEEEEIEPF) are enriched in acidic residues. In terms of domain architecture, ARID spans 306–398 (PEERENFLQQ…YLYGFEEYCR (93 aa)). Glycyl lysine isopeptide (Lys-Gly) (interchain with G-Cter in SUMO2) cross-links involve residues Lys-428 and Lys-461. Residues 437–464 (EVNVEDSKNMIPKEETPAEDESERKENI) show a composition bias toward basic and acidic residues. Disordered regions lie at residues 437-466 (EVNV…NIKP), 479-525 (PAQS…EQAR), 539-606 (RPAD…SDTG), 620-802 (LQAS…EEKR), 825-1129 (LNNS…RLPK), and 1168-1204 (SEVA…SITA). Phosphoserine is present on Ser-482. Residues 483–511 (DQEKEANITKLEEKESLEDKDGATARAEE) show a composition bias toward basic and acidic residues. The span at 546–555 (PKIKHRKKIK) shows a compositional bias: basic residues. Residues 556 to 569 (NKLDKEKDRDEKYS) are compositionally biased toward basic and acidic residues. A phosphoserine mark is found at Ser-579, Ser-581, and Ser-588. Basic and acidic residues predominate over residues 596–606 (DLADAKNSDTG). A Phosphoserine modification is found at Ser-630. 2 stretches are compositionally biased toward basic and acidic residues: residues 635–667 (ERCA…KEEL) and 691–700 (SPERLRKDVE). Lys-664 is covalently cross-linked (Glycyl lysine isopeptide (Lys-Gly) (interchain with G-Cter in SUMO2)). A phosphoserine mark is found at Ser-691 and Ser-703. Positions 701-713 (AISEDTDFEEEDE) are enriched in acidic residues. At Thr-706 the chain carries Phosphothreonine. Residues 721 to 730 (VKKDTTDKAL) show a composition bias toward basic and acidic residues. Residues 744 to 753 (IQTNCLQSGS) are compositionally biased toward polar residues. Basic and acidic residues-rich tracts occupy residues 755–765 (GKKEDRTKSKE), 825–843 (LNNS…RKDV), and 911–926 (KPVE…RKTE). Over residues 927–937 (FPSSGSNSVLN) the composition is skewed to polar residues. At Ser-930 the chain carries Phosphoserine. Phosphothreonine is present on Thr-942. Residues 944–965 (ESPSSVTVTETSQQQSSVTVSV) are compositionally biased toward low complexity. At Ser-945 the chain carries Phosphoserine. Residues 972–981 (EEVRSIKSET) are compositionally biased toward basic and acidic residues. Low complexity predominate over residues 1003–1017 (SSPAGFNASVSSSSS). The segment covering 1046–1064 (KKQKRSHKATVVNNKKKGK) has biased composition (basic residues). Thr-1066 is subject to Phosphothreonine. Phosphoserine occurs at positions 1068, 1069, 1071, and 1075. Positions 1112–1124 (KNGDKDPDLKEPS) are enriched in basic and acidic residues. Residues 1141 to 1186 (ENMTSAERISILQEKLQEIRKHYLSLKSEVASIDRRRKRLKKKERE) adopt a coiled-coil conformation. A compositionally biased stretch (low complexity) spans 1188 to 1204 (AATSSSSSSPSSSSITA).

In terms of assembly, component of a Sin3A corepressor complex consisting of SIN3A, SAP130, SUDS3/SAP45, SAP180, HDAC1 and HDAC2. Interacts with ARID4A. Interacts with AR.

The protein localises to the nucleus. Its function is as follows. Acts as a transcriptional repressor. May function in the assembly and/or enzymatic activity of the Sin3A corepressor complex or in mediating interactions between the complex and other regulatory complexes. Plays a role in the regulation of epigenetic modifications at the PWS/AS imprinting center near the SNRPN promoter, where it might function as part of a complex with RB1 and ARID4A. Involved in spermatogenesis, together with ARID4A, where it functions as a transcriptional coactivator for AR (androgen receptor) and enhances expression of genes required for sperm maturation. Regulates expression of the tight junction protein CLDN3 in the testis, which is important for integrity of the blood-testis barrier. Plays a role in myeloid homeostasis where it regulates the histone methylation state of bone marrow cells and expression of various genes involved in hematopoiesis. May function as a leukemia suppressor. The polypeptide is AT-rich interactive domain-containing protein 4B (Arid4b) (Rattus norvegicus (Rat)).